A 626-amino-acid chain; its full sequence is DNA-directed RNA polymerase subunit beta C-terminal section (626 aa).

The segment at 287–307 (NTKSKNTGKGSKPPRASKAQN) is disordered.

This sequence belongs to the RNA polymerase beta chain family. In terms of assembly, in plastids the minimal PEP RNA polymerase catalytic core is composed of four subunits: alpha, beta, beta', and beta''. When a (nuclear-encoded) sigma factor is associated with the core the holoenzyme is formed, which can initiate transcription.

It is found in the plastid. Its subcellular location is the chloroplast. The enzyme catalyses RNA(n) + a ribonucleoside 5'-triphosphate = RNA(n+1) + diphosphate. In terms of biological role, DNA-dependent RNA polymerase catalyzes the transcription of DNA into RNA using the four ribonucleoside triphosphates as substrates. The protein is DNA-directed RNA polymerase subunit beta C-terminal section (rpoB2) of Chlamydomonas reinhardtii (Chlamydomonas smithii).